The following is a 484-amino-acid chain: Endoglucanase 3 (484 aa).

Positions Met1 to Ala21 are cleaved as a signal peptide. The active-site Nucleophile is Asp77. An N-linked (GlcNAc...) asparagine glycan is attached at Asn370. Active-site residues include His402, Asp453, and Glu462.

The protein belongs to the glycosyl hydrolase 9 (cellulase E) family. As to expression, specifically expressed in root cap cells.

The protein localises to the secreted. It catalyses the reaction Endohydrolysis of (1-&gt;4)-beta-D-glucosidic linkages in cellulose, lichenin and cereal beta-D-glucans.. May be involved in the sloughing (cell-cell separation) of the root cap cells from root tip. The chain is Endoglucanase 3 (CEL5) from Arabidopsis thaliana (Mouse-ear cress).